A 1095-amino-acid chain; its full sequence is Tyrosine-sulfated glycopeptide receptor 1 (1095 aa).

A helical transmembrane segment spans residues 23-43 (PHMVLFVLLYVLSISVFFLTV). N-linked (GlcNAc...) asparagine glycosylation is found at N62 and N73. LRR repeat units follow at residues 91–115 (ENRV…VLDL), 116–139 (QRLS…FLSA), 141–165 (DQLL…SFGN), 170–195 (IFPI…VFLQ), 197–221 (AFNL…MCTA), 223–246 (PQLT…LSRC), 247–270 (SRLS…IYNL), 271–294 (PELE…ITRL), 295–318 (TKLT…IGKL), 320–342 (KLSS…LANC), 344–366 (KLVK…DFSR), 367–391 (FQSL…VYSC), 393–415 (MMTA…VLEL), 416–439 (ESLS…SILQ), 441–466 (CKKL…DFLR), 470–494 (FPSL…LIKL), 495–517 (QRVE…WLGT), 518–542 (LPDL…LFQL), and 566–589 (NPNN…IYIK). A glycan (N-linked (GlcNAc...) asparagine) is linked at N165. N-linked (GlcNAc...) asparagine glycans are attached at residues N199, N204, and N207. N258 is a glycosylation site (N-linked (GlcNAc...) asparagine). N341 carries N-linked (GlcNAc...) asparagine glycosylation. N377 carries N-linked (GlcNAc...) asparagine glycosylation. N430 carries N-linked (GlcNAc...) asparagine glycosylation. N-linked (GlcNAc...) asparagine glycosylation is found at N569, N592, N616, N627, N640, N662, and N714. LRR repeat units follow at residues 604–628 (LKVL…LSNL), 629–652 (TNLE…LTGL), and 654–677 (FLSY…QFDT). A helical membrane pass occupies residues 721–741 (LVLGLFFGVSLILVLLALLVL). 2 positions are modified to phosphothreonine: T792 and T800. The 272-residue stretch at 803–1074 (FSQANIIGCG…PNIQQVVDWL (272 aa)) folds into the Protein kinase domain. ATP is bound by residues 809-817 (IGCGGFGLV) and K831. Residues Y876 and Y916 each carry the phosphotyrosine modification. D929 serves as the catalytic Proton acceptor. The residue at position 971 (Y971) is a Phosphotyrosine.

Belongs to the protein kinase superfamily. Ser/Thr protein kinase family. Homo- and heterodimers with PSKR1. Interacts (via C-terminus) with AHA1 and AHA2 (via the R-domain). Autophosphorylated. As to expression, expressed ubiquitously, including in the shoot apical meristem and in the elongation zone of the root meristem.

The protein resides in the cell membrane. It carries out the reaction L-seryl-[protein] + ATP = O-phospho-L-seryl-[protein] + ADP + H(+). The enzyme catalyses L-threonyl-[protein] + ATP = O-phospho-L-threonyl-[protein] + ADP + H(+). Its function is as follows. Tyrosine-sulfated glycopeptide receptor with a serine/threonine-protein kinase activity. Regulates, in response to tyrosine-sulfated glycopeptide binding, a signaling cascade involved in cellular proliferation and plant growth. Not involved in PSK perception. Involved in plant immunity, with antagonistic effects on bacterial and fungal resistances. Mediates activation of the plasma membrane H(+)-ATPase by PSY1. Phosphorylates AHA2 at Thr-881. This chain is Tyrosine-sulfated glycopeptide receptor 1, found in Arabidopsis thaliana (Mouse-ear cress).